Reading from the N-terminus, the 387-residue chain is Glutamyl-tRNA reductase 1 (387 aa).

Residues 45-48 (TCNR), serine 96, 101-103 (ETD), and glutamine 107 each bind substrate. Residue cysteine 46 is the Nucleophile of the active site. Residue 175 to 180 (GAGSVG) coordinates NADP(+).

This sequence belongs to the glutamyl-tRNA reductase family. In terms of assembly, homodimer.

The enzyme catalyses (S)-4-amino-5-oxopentanoate + tRNA(Glu) + NADP(+) = L-glutamyl-tRNA(Glu) + NADPH + H(+). It functions in the pathway porphyrin-containing compound metabolism; protoporphyrin-IX biosynthesis; 5-aminolevulinate from L-glutamyl-tRNA(Glu): step 1/2. Functionally, catalyzes the NADPH-dependent reduction of glutamyl-tRNA(Glu) to glutamate 1-semialdehyde (GSA). This Pyrobaculum arsenaticum (strain DSM 13514 / JCM 11321 / PZ6) protein is Glutamyl-tRNA reductase 1.